We begin with the raw amino-acid sequence, 137 residues long: Large-conductance mechanosensitive channel (137 aa).

2 helical membrane passes run 9 to 29 (AFAV…GAAF) and 79 to 99 (IQSV…VKAI).

The protein belongs to the MscL family. Homopentamer.

It is found in the cell inner membrane. Functionally, channel that opens in response to stretch forces in the membrane lipid bilayer. May participate in the regulation of osmotic pressure changes within the cell. The protein is Large-conductance mechanosensitive channel of Pseudomonas fluorescens (strain Pf0-1).